Reading from the N-terminus, the 78-residue chain is MKTSGRLLFLCLAVGLLLESQAHPIADAEDATRNVGSDGTSVELSEILERGQDSSAEKGQRQNDHDVDESGHDIPFPS.

A signal peptide spans 1-22; sequence MKTSGRLLFLCLAVGLLLESQA. Residues 23–61 constitute a propeptide that is removed on maturation; it reads HPIADAEDATRNVGSDGTSVELSEILERGQDSSAEKGQR. The disordered stretch occupies residues 25 to 78; that stretch reads IADAEDATRNVGSDGTSVELSEILERGQDSSAEKGQRQNDHDVDESGHDIPFPS. Positions 34 to 43 are enriched in polar residues; that stretch reads NVGSDGTSVE. Basic and acidic residues predominate over residues 47 to 72; that stretch reads ILERGQDSSAEKGQRQNDHDVDESGH. The residue at position 62 (Gln-62) is a Pyrrolidone carboxylic acid.

It belongs to the conotoxin H superfamily. Expressed by the venom duct.

It is found in the secreted. Functionally, probable toxin. The sequence is that of Conotoxin ba1890.8 from Conus bayani (Bayan's cone).